Here is a 431-residue protein sequence, read N- to C-terminus: Dihydroorotase (431 aa).

Zn(2+) contacts are provided by His-55 and His-57. Substrate contacts are provided by residues 57–59 and Asn-89; that span reads HFR. Lys-139, His-169, His-223, and Asp-290 together coordinate Zn(2+). N6-carboxylysine is present on Lys-139. Asp-290 is an active-site residue. Residues His-294 and 308–309 each bind substrate; that span reads PG.

It belongs to the metallo-dependent hydrolases superfamily. DHOase family. Class I DHOase subfamily. Zn(2+) serves as cofactor.

It catalyses the reaction (S)-dihydroorotate + H2O = N-carbamoyl-L-aspartate + H(+). It functions in the pathway pyrimidine metabolism; UMP biosynthesis via de novo pathway; (S)-dihydroorotate from bicarbonate: step 3/3. Functionally, catalyzes the reversible cyclization of carbamoyl aspartate to dihydroorotate. The protein is Dihydroorotase of Methanothermobacter thermautotrophicus (strain ATCC 29096 / DSM 1053 / JCM 10044 / NBRC 100330 / Delta H) (Methanobacterium thermoautotrophicum).